Here is a 526-residue protein sequence, read N- to C-terminus: Glucose-6-phosphate isomerase (526 aa).

Catalysis depends on E320, which acts as the Proton donor. Residues H349 and K453 contribute to the active site.

This sequence belongs to the GPI family.

The protein resides in the cytoplasm. It catalyses the reaction alpha-D-glucose 6-phosphate = beta-D-fructose 6-phosphate. It participates in carbohydrate biosynthesis; gluconeogenesis. The protein operates within carbohydrate degradation; glycolysis; D-glyceraldehyde 3-phosphate and glycerone phosphate from D-glucose: step 2/4. In terms of biological role, catalyzes the reversible isomerization of glucose-6-phosphate to fructose-6-phosphate. In Rippkaea orientalis (strain PCC 8801 / RF-1) (Cyanothece sp. (strain PCC 8801)), this protein is Glucose-6-phosphate isomerase.